A 106-amino-acid polypeptide reads, in one-letter code: Diptericin A (106 aa).

Residues 1–19 (MQFTIAVALLCCAIASTLA) form the signal peptide. A propeptide spans 20–23 (YPMP) (removed by a dipeptidylpeptidase).

This sequence belongs to the attacin/sarcotoxin-2 family.

It localises to the secreted. Antimicrobial peptide required to resist Gram-negative bacterial infections, regulated by Dredd. The polypeptide is Diptericin A (Drosophila melanogaster (Fruit fly)).